Consider the following 295-residue polypeptide: Non-selective voltage-gated ion channel VDAC2 (295 aa).

2 residues coordinate ATP: lysine 24 and lysine 32. An N6-acetyllysine; alternate modification is found at lysine 32. N6-succinyllysine; alternate is present on lysine 32. Lysine 32 participates in a covalent cross-link: Glycyl lysine isopeptide (Lys-Gly) (interchain with G-Cter in ubiquitin); alternate. Transmembrane regions (beta stranded) follow at residues 38–47 and 51–59; these read LVKLDVKTKS and VEFSTSGSS. Residues lysine 65 and lysine 73 each participate in a glycyl lysine isopeptide (Lys-Gly) (interchain with G-Cter in ubiquitin) cross-link. The next 4 beta stranded transmembrane spans lie at 66–76, 81–88, 92–101, and 107–116; these read VSGTLETKYKW, LTFTEKWN, TLGTEIAIED, and LKLTFDTTFS. Lysine 121 is subject to N6-acetyllysine; alternate. Lysine 121 participates in a covalent cross-link: Glycyl lysine isopeptide (Lys-Gly) (interchain with G-Cter in ubiquitin); alternate. Glycyl lysine isopeptide (Lys-Gly) (interchain with G-Cter in ubiquitin) cross-links involve residues lysine 122 and lysine 125. 4 beta stranded membrane-spanning segments follow: residues 123–132, 135–142, 149–157, and 162–170; these read SGKIKSAYKR, INLGCDVD, AIHGSAVFG, and LAGYQMTFD. Lysine 173 is covalently cross-linked (Glycyl lysine isopeptide (Lys-Gly) (interchain with G-Cter in ubiquitin)). The next 6 membrane-spanning stretches (beta stranded) occupy residues 175 to 187, 190 to 197, 201 to 210, 214 to 223, 230 to 239, and 243 to 250; these read KLTRSNFAVGYRT, FQLHTNVN, EFGGSIYQKV, FDTSVNLAWT, RFGIAAKYQL, and ASISAKVN. The residue at position 205 (serine 205) is a Phosphoserine. Serine 252 is subject to Phosphoserine. Residues 254–256 and 272–276 each bind NAD(+); these read LIG and SALVD. Beta stranded transmembrane passes span 254-263 and 266-275; these read LIGVGYTQTL and GVKLTLSALV. Lysine 278 bears the N6-acetyllysine; alternate mark. Lysine 278 participates in a covalent cross-link: Glycyl lysine isopeptide (Lys-Gly) (interchain with G-Cter in ubiquitin); alternate. The chain crosses the membrane as a beta stranded span at residues 285–294; it reads HKLGLALELE. Lysine 286 participates in a covalent cross-link: Glycyl lysine isopeptide (Lys-Gly) (interchain with G-Cter in ubiquitin).

Belongs to the eukaryotic mitochondrial porin family. In terms of assembly, monomer, homodimer and higher order oligomers; formation of higher order structures is necessary for scramblase activity. Interacts with ARMC12 in a TBC1D21-dependent manner. Interacts with KLC3. Interacts with SPATA33. Interacts with PPP3CC in a SPATA33-dependent manner. Post-translationally, ubiquitinated by PRKN during mitophagy, leading to its degradation and enhancement of mitophagy. Deubiquitinated by USP30.

The protein resides in the mitochondrion outer membrane. Its subcellular location is the membrane. The catalysed reaction is chloride(in) = chloride(out). It catalyses the reaction K(+)(in) = K(+)(out). The enzyme catalyses a 1,2-diacyl-sn-glycero-3-phospho-L-serine(in) = a 1,2-diacyl-sn-glycero-3-phospho-L-serine(out). It carries out the reaction a 1,2-diacyl-sn-glycero-3-phosphocholine(in) = a 1,2-diacyl-sn-glycero-3-phosphocholine(out). The catalysed reaction is a 1,2-diacyl-sn-glycero-3-phospho-(1D-myo-inositol)(in) = a 1,2-diacyl-sn-glycero-3-phospho-(1D-myo-inositol)(out). Its function is as follows. Non-selective voltage-gated ion channel that mediates the transport of anions and cations through the mitochondrion outer membrane and plasma membrane. The channel adopts an open conformation at zero mV and a closed conformation at both positive and negative potentials. There are two populations of channels; the main that functions in a lower open-state conductance with lower ion selectivity, that switch, in a voltage-dependent manner, from the open to a low-conducting 'closed' state and the other that has a normal ion selectivity in the typical high conductance, 'open' state. Binds various lipids, including the sphingolipid ceramide, the phospholipid phosphatidylcholine, and the sterols cholesterol and oxysterol. Binding of ceramide promotes the mitochondrial outer membrane permeabilization (MOMP) apoptotic pathway. In terms of biological role, catalyzes the scrambling of phospholipids across the outer mitochondrial membrane; the mechanism is unrelated to channel activity and is capable of translocating both anionic and zwitterionic phospholipids. This Mesocricetus auratus (Golden hamster) protein is Non-selective voltage-gated ion channel VDAC2.